The chain runs to 102 residues: Small ribosomal subunit protein uS10 (102 aa).

Belongs to the universal ribosomal protein uS10 family. Part of the 30S ribosomal subunit.

Its function is as follows. Involved in the binding of tRNA to the ribosomes. This chain is Small ribosomal subunit protein uS10, found in Bifidobacterium adolescentis (strain ATCC 15703 / DSM 20083 / NCTC 11814 / E194a).